The sequence spans 227 residues: Uracil-DNA glycosylase (227 aa).

Asp65 functions as the Proton acceptor in the catalytic mechanism.

The protein belongs to the uracil-DNA glycosylase (UDG) superfamily. UNG family.

The protein localises to the cytoplasm. It carries out the reaction Hydrolyzes single-stranded DNA or mismatched double-stranded DNA and polynucleotides, releasing free uracil.. Its function is as follows. Excises uracil residues from the DNA which can arise as a result of misincorporation of dUMP residues by DNA polymerase or due to deamination of cytosine. This is Uracil-DNA glycosylase from Lactobacillus delbrueckii subsp. bulgaricus (strain ATCC BAA-365 / Lb-18).